A 406-amino-acid polypeptide reads, in one-letter code: (R)-benzylsuccinyl-CoA dehydrogenase (406 aa).

It belongs to the acyl-CoA dehydrogenase family. As to quaternary structure, homotetramer. The cofactor is FAD.

It carries out the reaction (R)-2-benzylsuccinyl-CoA + oxidized [electron-transfer flavoprotein] + H(+) = (E)-2-benzylidenesuccinyl-CoA + reduced [electron-transfer flavoprotein]. It functions in the pathway xenobiotic degradation; toluene degradation. Its activity is regulated as follows. Inhibited by (S)-benzylsuccinyl-CoA. Its function is as follows. Catalyzes the oxidation of benzylsuccinyl-CoA to benzylidenesuccinyl-CoA. The polypeptide is (R)-benzylsuccinyl-CoA dehydrogenase (bbsG) (Thauera aromatica).